A 60-amino-acid polypeptide reads, in one-letter code: uncharacterized protein (60 aa).

A helical membrane pass occupies residues Ser38–Tyr58.

It localises to the membrane. This is an uncharacterized protein from Saccharomyces cerevisiae (strain ATCC 204508 / S288c) (Baker's yeast).